The following is a 178-amino-acid chain: Conodipine-P3 (178 aa).

The N-terminal stretch at 1–24 is a signal peptide; it reads MKLLAPVLWAMAALGVTWLVAVDS. At proline 38 the chain carries 4-hydroxyproline. Proline 42 and proline 49 each carry 4-hydroxyproline; partial. The active site involves histidine 54. Residues 98–130 constitute a propeptide, interchain peptide; that stretch reads KREVTSHRATSIAHSRLWKTALDQKSFLNRKAR. Position 131 is a pyrrolidone carboxylic acid (glutamine 131). Proline 137 carries the post-translational modification 4-hydroxyproline; partial.

The protein belongs to the phospholipase A2 family. Group IX subfamily. As to quaternary structure, heterodimer of an alpha and a beta chain; probably disulfide-linked. Ca(2+) serves as cofactor. In terms of tissue distribution, expressed by the venom duct.

It localises to the secreted. The catalysed reaction is a 1,2-diacyl-sn-glycero-3-phosphocholine + H2O = a 1-acyl-sn-glycero-3-phosphocholine + a fatty acid + H(+). Catalyzes the calcium-dependent hydrolysis of the 2-acyl groups in 3-sn-phosphoglycerides. The chain is Conodipine-P3 from Conus purpurascens (Purple cone).